A 120-amino-acid chain; its full sequence is Chaperonin GroEL (120 aa).

23–27 (DGTTT) provides a ligand contact to ATP.

Belongs to the chaperonin (HSP60) family. Forms a cylinder of 14 subunits composed of two heptameric rings stacked back-to-back. Interacts with the co-chaperonin GroES.

The protein localises to the cytoplasm. The enzyme catalyses ATP + H2O + a folded polypeptide = ADP + phosphate + an unfolded polypeptide.. In terms of biological role, together with its co-chaperonin GroES, plays an essential role in assisting protein folding. The GroEL-GroES system forms a nano-cage that allows encapsulation of the non-native substrate proteins and provides a physical environment optimized to promote and accelerate protein folding. In Mycobacterium shimoidei, this protein is Chaperonin GroEL.